The chain runs to 72 residues: High-potential iron-sulfur protein isozyme 1 (72 aa).

[4Fe-4S] cluster contacts are provided by Cys34, Cys37, Cys51, and Cys65.

Belongs to the high-potential iron-sulfur protein (HiPIP) family. In terms of assembly, homodimer.

Its function is as follows. Specific class of high-redox-potential 4Fe-4S ferredoxins. Functions in anaerobic electron transport in most purple and in some other photosynthetic bacteria and in at least one genus (Paracoccus) of halophilic, denitrifying bacteria. This Ectothiorhodospira shaposhnikovii (Ectothiorhodospira vacuolata) protein is High-potential iron-sulfur protein isozyme 1 (hip1).